The primary structure comprises 572 residues: Na(+)/citrate cotransporter (572 aa).

8 helical membrane-spanning segments follow: residues 13–33, 53–73, 80–100, 124–144, 218–238, 255–275, 315–335, and 357–377; these read SFAILLFTPILMLPLVILIPD, VIPVAVTSLLPVLLFPLLKVL, IQYMKDTNMLFLGSLIVAVAV, LMLGFMFVTAFLSMWISNTAA, SASIGGTATLTGTGPNVVLLG, SWFGFAFPNMVMMLVLAWLWL, SLSYPECNVLFCFTLLVILWF, and HITDATVAIFVAILLFIIPSQ. Asn-382 is a glycosylation site (N-linked (GlcNAc...) asparagine). 4 helical membrane-spanning segments follow: residues 410–430, 443–463, 491–511, and 532–552; these read VPWDIVLLLGGGFAMAKGCET, PLRLVKPAVITLILSCLVAMT, PLYVMIPCTMSASLAFMLPVA, and TGLIMNFVGILSVFLSVNTWG. Residue Asn-566 is glycosylated (N-linked (GlcNAc...) asparagine).

It belongs to the SLC13A/DASS transporter (TC 2.A.47) family. NADC subfamily. In terms of assembly, homodimer.

The protein localises to the cell membrane. The catalysed reaction is citrate(out) + 4 Na(+)(out) = citrate(in) + 4 Na(+)(in). Inhibited by Li(+). Functionally, high-affinity sodium/citrate cotransporter that mediates citrate entry into cells, which is a critical participant of biochemical pathways. May function in various metabolic processes in which citrate has a critical role such as energy production (Krebs cycle), fatty acid synthesis, cholesterol synthesis, glycolysis, and gluconeogenesis. Transports citrate into the cell in a Na(+)-dependent manner, recognizing the trivalent form of citrate (physiological pH) rather than the divalent form. Can recognizes succinate as a substrate, but its affinity for succinate is several fold lower than for citrate. The stoichiometry is probably 4 Na(+) for each carboxylate, irrespective of whether the translocated substrate is divalent or trivalent, rendering the process electrogenic. Involved in the regulation of citrate levels in the brain. This is Na(+)/citrate cotransporter (Slc13a5) from Mus musculus (Mouse).